Reading from the N-terminus, the 507-residue chain is ATP synthase subunit alpha, chloroplastic (507 aa).

Residue 170 to 177 (GDRQTGKT) participates in ATP binding. Threonine 257 is modified (phosphothreonine).

Belongs to the ATPase alpha/beta chains family. F-type ATPases have 2 components, CF(1) - the catalytic core - and CF(0) - the membrane proton channel. CF(1) has five subunits: alpha(3), beta(3), gamma(1), delta(1), epsilon(1). CF(0) has four main subunits: a, b, b' and c.

It is found in the plastid. It localises to the chloroplast thylakoid membrane. The enzyme catalyses ATP + H2O + 4 H(+)(in) = ADP + phosphate + 5 H(+)(out). Its function is as follows. Produces ATP from ADP in the presence of a proton gradient across the membrane. The alpha chain is a regulatory subunit. The polypeptide is ATP synthase subunit alpha, chloroplastic (Aethionema cordifolium (Lebanon stonecress)).